We begin with the raw amino-acid sequence, 316 residues long: Protoheme IX farnesyltransferase (316 aa).

Transmembrane regions (helical) follow at residues 34-54 (VMSLVVFTAFAGLVLAPGHIN), 55-75 (PFIGFTAILCIAIGAGASGAL), 95-115 (IPAGKILPQEALAFGLTLSAF), 118-138 (IILGLAVHWLAAGLLAFTIFF), 155-175 (IVIGGAAGAFPPMIGWACVTG), 182-202 (IVLFLIIFLWTPAHFWALALF), 228-250 (IVIYAVLTAVSGVCPTLLGFASL), 254-273 (AFATVMGLGFVWYSLGVLRM), and 287-307 (FAFSIAYLFAIFSALLVDYAI).

This sequence belongs to the UbiA prenyltransferase family. Protoheme IX farnesyltransferase subfamily.

Its subcellular location is the cell inner membrane. The enzyme catalyses heme b + (2E,6E)-farnesyl diphosphate + H2O = Fe(II)-heme o + diphosphate. It functions in the pathway porphyrin-containing compound metabolism; heme O biosynthesis; heme O from protoheme: step 1/1. Functionally, converts heme B (protoheme IX) to heme O by substitution of the vinyl group on carbon 2 of heme B porphyrin ring with a hydroxyethyl farnesyl side group. In Rhizobium meliloti (strain 1021) (Ensifer meliloti), this protein is Protoheme IX farnesyltransferase.